We begin with the raw amino-acid sequence, 100 residues long: Integration host factor subunit alpha 2 (100 aa).

This sequence belongs to the bacterial histone-like protein family. As to quaternary structure, heterodimer of an alpha and a beta chain.

In terms of biological role, this protein is one of the two subunits of integration host factor, a specific DNA-binding protein that functions in genetic recombination as well as in transcriptional and translational control. This chain is Integration host factor subunit alpha 2, found in Dechloromonas aromatica (strain RCB).